The following is a 105-amino-acid chain: MAEWSGEYISPYAEHGKKSEQVKKITVSIPLKVLKILTDERTRRQVNNLRHATNSELLCEAFLHAFTGQPLPNDEDLRKERSDEIPEAAKAIMRELGIDPDTWEY.

This sequence belongs to the MetJ family. Homodimer.

It localises to the cytoplasm. This regulatory protein, when combined with SAM (S-adenosylmethionine) represses the expression of the methionine regulon and of enzymes involved in SAM synthesis. The chain is Met repressor from Klebsiella pneumoniae subsp. pneumoniae (strain ATCC 700721 / MGH 78578).